The sequence spans 414 residues: Gamma-glutamyl phosphate reductase (414 aa).

It belongs to the gamma-glutamyl phosphate reductase family.

It localises to the cytoplasm. The catalysed reaction is L-glutamate 5-semialdehyde + phosphate + NADP(+) = L-glutamyl 5-phosphate + NADPH + H(+). The protein operates within amino-acid biosynthesis; L-proline biosynthesis; L-glutamate 5-semialdehyde from L-glutamate: step 2/2. Its function is as follows. Catalyzes the NADPH-dependent reduction of L-glutamate 5-phosphate into L-glutamate 5-semialdehyde and phosphate. The product spontaneously undergoes cyclization to form 1-pyrroline-5-carboxylate. The sequence is that of Gamma-glutamyl phosphate reductase from Francisella philomiragia subsp. philomiragia (strain ATCC 25017 / CCUG 19701 / FSC 153 / O#319-036).